Reading from the N-terminus, the 408-residue chain is Broad specificity amino-acid racemase (408 aa).

A signal peptide spans 1-24 (MNFKKTLLSIAIASASLTPAFSYS). Cys71 and Cys97 form a disulfide bridge. Catalysis depends on Lys75, which acts as the Proton acceptor. Position 75 is an N6-(pyridoxal phosphate)lysine (Lys75). Residue Arg174 coordinates substrate. The Proton acceptor role is filled by Tyr300. Residue Met348 coordinates substrate.

It belongs to the alanine racemase family. Bsr subfamily. Pyridoxal 5'-phosphate is required as a cofactor.

The protein localises to the periplasm. The enzyme catalyses an L-alpha-amino acid = a D-alpha-amino acid. The catalysed reaction is L-lysine = D-lysine. It catalyses the reaction L-arginine = D-arginine. Functionally, amino-acid racemase able to utilize a broad range of substrates. This is Broad specificity amino-acid racemase (alr) from Vibrio vulnificus (strain CMCP6).